The following is a 350-amino-acid chain: D-alanine--D-alanine ligase (350 aa).

The ATP-grasp domain maps to 135–335 (KLYAKNLGVK…LAQSLPKTPK (201 aa)). An ATP-binding site is contributed by 164–219 (KPSFNFPFIVKPNNAGSSLGVSVVKEEKELAYALDGAFEYSKEVLIEPFIQRVKEY). Positions 291, 303, and 305 each coordinate Mg(2+).

This sequence belongs to the D-alanine--D-alanine ligase family. Requires Mg(2+) as cofactor. The cofactor is Mn(2+).

Its subcellular location is the cytoplasm. The enzyme catalyses 2 D-alanine + ATP = D-alanyl-D-alanine + ADP + phosphate + H(+). It functions in the pathway cell wall biogenesis; peptidoglycan biosynthesis. Its function is as follows. Cell wall formation. The polypeptide is D-alanine--D-alanine ligase (Helicobacter acinonychis (strain Sheeba)).